The chain runs to 467 residues: Asparagine--tRNA ligase (467 aa).

The protein belongs to the class-II aminoacyl-tRNA synthetase family. As to quaternary structure, homodimer.

The protein localises to the cytoplasm. The catalysed reaction is tRNA(Asn) + L-asparagine + ATP = L-asparaginyl-tRNA(Asn) + AMP + diphosphate + H(+). This Actinobacillus succinogenes (strain ATCC 55618 / DSM 22257 / CCUG 43843 / 130Z) protein is Asparagine--tRNA ligase.